Consider the following 308-residue polypeptide: Transaldolase (308 aa).

The active-site Schiff-base intermediate with substrate is the lysine 125.

It belongs to the transaldolase family. Type 1 subfamily. In terms of assembly, homodimer.

It is found in the cytoplasm. It catalyses the reaction D-sedoheptulose 7-phosphate + D-glyceraldehyde 3-phosphate = D-erythrose 4-phosphate + beta-D-fructose 6-phosphate. The protein operates within carbohydrate degradation; pentose phosphate pathway; D-glyceraldehyde 3-phosphate and beta-D-fructose 6-phosphate from D-ribose 5-phosphate and D-xylulose 5-phosphate (non-oxidative stage): step 2/3. In terms of biological role, transaldolase is important for the balance of metabolites in the pentose-phosphate pathway. The sequence is that of Transaldolase from Pseudomonas putida (strain W619).